Consider the following 61-residue polypeptide: Metallothionein-2 (61 aa).

The residue at position 1 (Met1) is an N-acetylmethionine. A beta region spans residues 1-29 (MDPNCSCTAGESCTCAGSCKCKDCKCASC). Cys5, Cys7, Cys13, Cys15, Cys19, Cys21, Cys24, Cys26, Cys29, Cys33, Cys34, Cys36, Cys37, Cys41, Cys44, Cys48, Cys50, and Cys57 together coordinate a divalent metal cation. The alpha stretch occupies residues 30–61 (KKSCCSCCPVGCAKCAQGCVCKGASDKCSCCA). A Phosphoserine modification is found at Ser58. A divalent metal cation contacts are provided by Cys59 and Cys60.

Belongs to the metallothionein superfamily. Type 1 family. Interacts with EOLA1.

Functionally, metallothioneins have a high content of cysteine residues that bind various heavy metals; these proteins are transcriptionally regulated by both heavy metals and glucocorticoids. The polypeptide is Metallothionein-2 (MT2A) (Ovis aries (Sheep)).